Reading from the N-terminus, the 281-residue chain is Transmembrane protein 163 (281 aa).

The Cytoplasmic portion of the chain corresponds to 1-80 (MEPLDTELCY…HEAQNYRKKA (80 aa)). The segment at 16–44 (IVQPSCNGQTPPGHRTLSPTQQMDHEQQM) is disordered. A helical membrane pass occupies residues 81 to 101 (LWVSWLSIAITLILAIAAFTV). Residues 102 to 108 (SVMRYSA) are Extracellular-facing. Residues 109–129 (SSFGFALDAVLDVLSSAIVLW) traverse the membrane as a helical segment. Topologically, residues 130 to 145 (RYSNAAAVHSAHREYM) are cytoplasmic. A helical membrane pass occupies residues 146 to 166 (ACCILGVIFLLSSICIVSKAI). Over 167–179 (HDLSIRVMPEVDG) the chain is Extracellular. Residues 180-200 (FLFSVSILSGILCSLLAAIKF) traverse the membrane as a helical segment. The Cytoplasmic segment spans residues 201–209 (MLGKVLTSR). The chain crosses the membrane as a helical span at residues 210-230 (ALITDGFNSLVGGIMGFSILL). Residues 231–240 (SAEVYKHNSK) lie on the Extracellular side of the membrane. A helical membrane pass occupies residues 241 to 261 (VWYLDGSVGILIGLIIMSYGI). At 262–281 (KLLMDMVPRVRQTRHYEMFE) the chain is on the cytoplasmic side.

The protein belongs to the TMEM163 family.

It is found in the cytoplasmic vesicle. Its subcellular location is the secretory vesicle. The protein resides in the synaptic vesicle membrane. It localises to the early endosome membrane. Its function is as follows. May bind zinc and other divalent cations and recruit them to vesicular organelles. The protein is Transmembrane protein 163 (tmem163) of Xenopus laevis (African clawed frog).